The primary structure comprises 376 residues: Lipoyl synthase 1, chloroplastic (376 aa).

Positions 1 to 13 are enriched in polar residues; it reads MIEQSLSKPSFSL. 2 disordered regions span residues 1–25 and 47–75; these read MIEQ…KSKS and IDAK…DPNV. Residues 1 to 35 constitute a chloroplast transit peptide; that stretch reads MIEQSLSKPSFSLSIPIPQPPKSKSSFLCSYSKIR. 7 residues coordinate [4Fe-4S] cluster: Cys-107, Cys-112, Cys-118, Cys-138, Cys-142, Cys-145, and Ser-353. In terms of domain architecture, Radical SAM core spans 121–342; that stretch reads GGGDGIATAT…KEYGESIGFR (222 aa).

It belongs to the radical SAM superfamily. Lipoyl synthase family. [4Fe-4S] cluster is required as a cofactor.

The protein localises to the plastid. It localises to the chloroplast. It carries out the reaction [[Fe-S] cluster scaffold protein carrying a second [4Fe-4S](2+) cluster] + N(6)-octanoyl-L-lysyl-[protein] + 2 oxidized [2Fe-2S]-[ferredoxin] + 2 S-adenosyl-L-methionine + 4 H(+) = [[Fe-S] cluster scaffold protein] + N(6)-[(R)-dihydrolipoyl]-L-lysyl-[protein] + 4 Fe(3+) + 2 hydrogen sulfide + 2 5'-deoxyadenosine + 2 L-methionine + 2 reduced [2Fe-2S]-[ferredoxin]. It functions in the pathway protein modification; protein lipoylation via endogenous pathway; protein N(6)-(lipoyl)lysine from octanoyl-[acyl-carrier-protein]: step 2/2. In terms of biological role, catalyzes the radical-mediated insertion of two sulfur atoms into the C-6 and C-8 positions of the octanoyl moiety bound to the lipoyl domains of lipoate-dependent enzymes, thereby converting the octanoylated domains into lipoylated derivatives. The chain is Lipoyl synthase 1, chloroplastic from Populus trichocarpa (Western balsam poplar).